The primary structure comprises 346 residues: MTLEQYGFTNFFKEQKIAATSSYGRVTAVFRDYYRVITENEEFLASLKRGNFYELSSTSLPAVGDFVEVSSDAQILSVLERKTVFSRMNKDSEEQLIAANFDYALIVMSLNHDFNLNRLERYLTVAWDSGATPIIILTKADLVEDLTAFAQQLETVAYGVPAYYVDNLSHHGFEALERDLKPNSTLVLLGSSGVGKSSFINSLAGTDLMKTAGIREDDSKGKHTTTHREMHLLTNGWIVIDTPGMREFGVGFNQAGLETTFSDVEELAEGCRFHDCSHTQEPGCAVKAALEDGTLTMQHYENWLKLQREMAYHARKNSPALARQERDRWKVIQKSLRTHLKTRPKK.

In terms of domain architecture, CP-type G spans 93–248 (EEQLIAANFD…VIDTPGMREF (156 aa)). GTP contacts are provided by residues 138–141 (TKAD) and 190–198 (GSSGVGKSS). The Zn(2+) site is built by C271, C276, H278, and C284.

It belongs to the TRAFAC class YlqF/YawG GTPase family. RsgA subfamily. In terms of assembly, monomer. Associates with 30S ribosomal subunit, binds 16S rRNA. It depends on Zn(2+) as a cofactor.

It localises to the cytoplasm. One of several proteins that assist in the late maturation steps of the functional core of the 30S ribosomal subunit. Helps release RbfA from mature subunits. May play a role in the assembly of ribosomal proteins into the subunit. Circularly permuted GTPase that catalyzes slow GTP hydrolysis, GTPase activity is stimulated by the 30S ribosomal subunit. The chain is Small ribosomal subunit biogenesis GTPase RsgA 2 from Listeria monocytogenes serotype 4b (strain F2365).